An 888-amino-acid polypeptide reads, in one-letter code: Serine/arginine repetitive matrix protein 1 (888 aa).

Positions 27–126 (QLKFAECLEK…AGIPTAFLEL (100 aa)) constitute a PWI domain. Positions 139–169 (EKLASMKKQDEDKEKRDKEDKDNREKRDRSR) are enriched in basic and acidic residues. Positions 139–888 (EKLASMKKQD…MRKAQVSPPS (750 aa)) are disordered. Positions 170–206 (SPRRRKSRSPSPRRRSSPIRRERKRSHSRSPHHRTKS) are enriched in basic residues. Basic and acidic residues-rich tracts occupy residues 213–232 (PEKK…KETV) and 254–276 (ETKE…EKTR). Composition is skewed to basic residues over residues 277-325 (QRSP…RTPP) and 332-347 (PRHR…RRRS). 2 stretches are compositionally biased toward low complexity: residues 348–364 (SASL…SRSR) and 473–496 (SVQQ…SSSS). Basic residues-rich tracts occupy residues 528 to 554 (PRKR…RRRS) and 561 to 585 (PRRR…RSPS). Positions 586–598 (PRRYSPPIQRRYS) are enriched in low complexity. 2 stretches are compositionally biased toward basic residues: residues 614 to 629 (PKRR…RRVS) and 642 to 656 (AKRR…HRKG). Positions 662–677 (SNRETRSPPQNKRDSP) are enriched in basic and acidic residues. Low complexity-rich tracts occupy residues 697-712 (ASAS…PSTR), 728-749 (ASTP…SGSP), and 763-775 (ARSR…WSPA). The segment covering 780–790 (SPTQSPSPARN) has biased composition (polar residues). Residues 798-823 (KKKKKKKDKKHKKDKKHKKHKKHKKE) are compositionally biased toward basic residues. Positions 826 to 843 (AVAAAPAAVAAADTTSAQ) are enriched in low complexity. Basic and acidic residues predominate over residues 866–876 (DLEKHLREKAL).

Belongs to the splicing factor SR family.

The protein localises to the nucleus. Involved in pre-mRNA splicing and processing events. This Gallus gallus (Chicken) protein is Serine/arginine repetitive matrix protein 1 (SRRM1).